Here is a 386-residue protein sequence, read N- to C-terminus: Phosphoglycerate kinase (386 aa).

Substrate-binding positions include Asp-21–Asn-23, Arg-36, His-59–Arg-62, Arg-113, and Arg-146. ATP-binding positions include Lys-197, Glu-314, and Gly-340 to Thr-343.

Belongs to the phosphoglycerate kinase family. In terms of assembly, monomer.

The protein localises to the cytoplasm. The catalysed reaction is (2R)-3-phosphoglycerate + ATP = (2R)-3-phospho-glyceroyl phosphate + ADP. Its pathway is carbohydrate degradation; glycolysis; pyruvate from D-glyceraldehyde 3-phosphate: step 2/5. The sequence is that of Phosphoglycerate kinase from Azotobacter vinelandii (strain DJ / ATCC BAA-1303).